Here is a 329-residue protein sequence, read N- to C-terminus: DNA-directed RNA polymerase subunit alpha (329 aa).

Residues 1 to 234 (MQGSVTEFLK…EQLDAFVELR (234 aa)) form an alpha N-terminal domain (alpha-NTD) region. The interval 248–329 (FDPILLRPVD…WPPASLADDL (82 aa)) is alpha C-terminal domain (alpha-CTD).

It belongs to the RNA polymerase alpha chain family. Homodimer. The RNAP catalytic core consists of 2 alpha, 1 beta, 1 beta' and 1 omega subunit. When a sigma factor is associated with the core the holoenzyme is formed, which can initiate transcription.

It catalyses the reaction RNA(n) + a ribonucleoside 5'-triphosphate = RNA(n+1) + diphosphate. Its function is as follows. DNA-dependent RNA polymerase catalyzes the transcription of DNA into RNA using the four ribonucleoside triphosphates as substrates. The polypeptide is DNA-directed RNA polymerase subunit alpha (Shewanella sp. (strain ANA-3)).